A 319-amino-acid polypeptide reads, in one-letter code: Probable cell division protein WhiA (319 aa).

A DNA-binding region (H-T-H motif) is located at residues 277–310 (SLEELGKLAEPAMTKDAIAGRIRRLLCLADKRAK).

Belongs to the WhiA family.

Its function is as follows. Involved in cell division and chromosome segregation. This is Probable cell division protein WhiA from Tropheryma whipplei (strain Twist) (Whipple's bacillus).